Reading from the N-terminus, the 349-residue chain is Merozoite surface protein P38 (349 aa).

A signal peptide spans 1 to 21; it reads MKRWSIITGIVIIFCILTCKG. 2 consecutive 6-Cys domains span residues 22 to 149 and 153 to 301; these read QVEN…ISNG and KIPG…YLTN. Disulfide bonds link Cys-77-Cys-127, Cys-157-Cys-183, Cys-197-Cys-278, and Cys-208-Cys-276. Residues Asn-294, Asn-295, and Asn-301 are each glycosylated (N-linked (GlcNAc...) asparagine). Residue Asn-315 is the site of GPI-anchor amidated asparagine attachment. The propeptide at 316–349 is removed in mature form; that stretch reads SEIFERIEREEISFAFSSYLSITLILLYLFFLNF.

The protein resides in the cell surface. It is found in the cell membrane. The protein is Merozoite surface protein P38 (PFS38) of Plasmodium falciparum (isolate 3D7).